We begin with the raw amino-acid sequence, 130 residues long: Follitropin subunit beta (130 aa).

Residues 1–20 (MMKLIQLCILFWCWRAICCH) form the signal peptide. 6 disulfide bridges follow: Cys-22–Cys-70, Cys-36–Cys-85, Cys-39–Cys-123, Cys-47–Cys-101, Cys-51–Cys-103, and Cys-106–Cys-113. Residues Asn-26 and Asn-43 are each glycosylated (N-linked (GlcNAc...) asparagine).

This sequence belongs to the glycoprotein hormones subunit beta family. Heterodimer. The active follitropin is a heterodimer composed of an alpha chain/CGA shared with other hormones and a unique beta chain/FSHB shown here.

It is found in the secreted. Its function is as follows. Together with the alpha chain CGA constitutes follitropin, the follicle-stimulating hormone, and provides its biological specificity to the hormone heterodimer. Binds FSHR, a G protein-coupled receptor, on target cells to activate downstream signaling pathways. Follitropin is involved in follicle development and spermatogenesis in reproductive organs. In Mus musculus (Mouse), this protein is Follitropin subunit beta (Fshb).